The following is a 515-amino-acid chain: Protein NRT1/ PTR FAMILY 4.1 (515 aa).

12 helical membrane passes run 24–44 (GIKA…VFLA), 71–91 (FVGT…SFLT), 93–113 (FAAF…LTLQ), 134–154 (VLFT…GSLP), 168–188 (LISG…FLAV), 204–224 (FTIS…GCPM), 298–318 (FLAL…VAQM), 339–359 (IPVA…LALY), 381–401 (IGYG…VEVK), 413–433 (ISVF…MLTV), 461–481 (AMGF…TGWL), and 492–512 (LFYL…IFWA).

Belongs to the major facilitator superfamily. Proton-dependent oligopeptide transporter (POT/PTR) (TC 2.A.17) family. As to expression, expressed in siliques and flowers.

It localises to the membrane. Functionally, involved in (+) and (-)-abscisic acid transport (ABA) and in gibberellin import. This is Protein NRT1/ PTR FAMILY 4.1 (NPF4.1) from Arabidopsis thaliana (Mouse-ear cress).